Here is a 332-residue protein sequence, read N- to C-terminus: MTNSTLPPAQLHHLPASSIKSGAVNGAAADPVGTNEKFLQILRAPIDYLLTIPGKDVRGKMMNAFNQWLQIPEEKLDIIKEVIKLLHTASLLIDDIQDNSRLRRGLPVAHSIFGVAQTINTANYAYFLAQQELNKLDCAAAYEVFTEELLRLHQGQGMDIYWRDSSLCPTEEEYFEMVGNKTGGLFRLAVRLMQLASNKDCDFVPFVNVLGILFQIRDDYLNLQSDLYTKNKGFGEDLTEGKFSFPIIHSIRADPASITLTSILKQRTEDEDVKRYAISYIESTGSFEHCRRKIDELVGEARMCVKDMSPEDAKVADGIMAMVGLGAGGLSI.

Isopentenyl diphosphate is bound by residues lysine 55, arginine 58, and histidine 87. Mg(2+)-binding residues include aspartate 94 and aspartate 98. Arginine 103 contributes to the dimethylallyl diphosphate binding site. An isopentenyl diphosphate-binding site is contributed by arginine 104. 3 residues coordinate dimethylallyl diphosphate: lysine 181, threonine 182, and glutamine 215. Aspartate 218 provides a ligand contact to Mg(2+). Dimethylallyl diphosphate contacts are provided by asparagine 222, lysine 232, and lysine 242.

It belongs to the FPP/GGPP synthase family. Mg(2+) is required as a cofactor.

It carries out the reaction isopentenyl diphosphate + dimethylallyl diphosphate = (2E)-geranyl diphosphate + diphosphate. It catalyses the reaction isopentenyl diphosphate + (2E)-geranyl diphosphate = (2E,6E)-farnesyl diphosphate + diphosphate. The catalysed reaction is isopentenyl diphosphate + (2E,6E)-farnesyl diphosphate = (2E,6E,10E)-geranylgeranyl diphosphate + diphosphate. The protein operates within secondary metabolite biosynthesis; terpenoid biosynthesis. Its function is as follows. Geranylgeranyl pyrophosphate synthase; part of the gene cluster that mediates the biosynthesis of the diterpenoid pyrones subglutinols A and B. The first step of the pathway is the synthesis of the alpha-pyrone moiety by the polyketide synthase dpasA via condensation of one acetyl-CoA starter unit with 3 malonyl-CoA units and 2 methylations. The alpha-pyrone is then combined with geranylgeranyl pyrophosphate (GGPP) formed by the GGPP synthase dpasD through the action of the prenyltransferase dpasC to yield a linear alpha-pyrone diterpenoid. Subsequent steps in the diterpenoid pyrone biosynthetic pathway involve the decalin core formation, which is initiated by the epoxidation of the C10-C11 olefin by the FAD-dependent oxidoreductase dpasE, and is followed by a cyclization cascade catalyzed by the terpene cyclase dpasB. The FAD-linked oxidoreductase dpasF is then involved in tetrahydrofuran (THF) ring formation at the C5 unit to complete the formation of subglutinols A and B. DpasF also possesses an additional catalytic ability of multi-step oxidations to generate a new DDP analog with an enone system at the C5 named FDDP A. This is Geranylgeranyl pyrophosphate synthase dpasD from Apiospora sacchari (Arthrinium sacchari).